The primary structure comprises 217 residues: N-(5'-phosphoribosyl)anthranilate isomerase (217 aa).

It belongs to the TrpF family.

The enzyme catalyses N-(5-phospho-beta-D-ribosyl)anthranilate = 1-(2-carboxyphenylamino)-1-deoxy-D-ribulose 5-phosphate. The protein operates within amino-acid biosynthesis; L-tryptophan biosynthesis; L-tryptophan from chorismate: step 3/5. The chain is N-(5'-phosphoribosyl)anthranilate isomerase from Bacillus velezensis (strain DSM 23117 / BGSC 10A6 / LMG 26770 / FZB42) (Bacillus amyloliquefaciens subsp. plantarum).